The following is a 341-amino-acid chain: HTH-type transcriptional repressor PurR (341 aa).

The 55-residue stretch at 2–56 folds into the HTH lacI-type domain; the sequence is ATIKDVAKRAGVSTTTVSHVINKTRFVADETKAAVWEAIKELHYSPSAVARSLKV. The H-T-H motif DNA-binding region spans 4–23; the sequence is IKDVAKRAGVSTTTVSHVIN. A DNA-binding region spans residues 48–56; sequence SAVARSLKV. 5 residues coordinate hypoxanthine: Y73, R190, T192, F221, and D275.

As to quaternary structure, homodimer.

The protein operates within purine metabolism; purine nucleotide biosynthesis [regulation]. Its function is as follows. Is the main repressor of the genes involved in the de novo synthesis of purine nucleotides, regulating purB, purC, purEK, purF, purHD, purL, purMN and guaBA expression. PurR is allosterically activated to bind its cognate DNA by binding the purine corepressors, hypoxanthine or guanine, thereby effecting transcription repression. In Edwardsiella ictaluri (strain 93-146), this protein is HTH-type transcriptional repressor PurR.